We begin with the raw amino-acid sequence, 738 residues long: DNA topoisomerase 4 subunit A (738 aa).

The Topo IIA-type catalytic domain maps to 32–496 (LPDVRDGLKP…SFEEVDLTNQ (465 aa)). The O-(5'-phospho-DNA)-tyrosine intermediate role is filled by Tyr-120.

It belongs to the type II topoisomerase GyrA/ParC subunit family. ParC type 1 subfamily. As to quaternary structure, heterotetramer composed of ParC and ParE.

Its subcellular location is the cell membrane. The enzyme catalyses ATP-dependent breakage, passage and rejoining of double-stranded DNA.. In terms of biological role, topoisomerase IV is essential for chromosome segregation. It relaxes supercoiled DNA. Performs the decatenation events required during the replication of a circular DNA molecule. This chain is DNA topoisomerase 4 subunit A, found in Rickettsia prowazekii (strain Madrid E).